The primary structure comprises 305 residues: Ferrochelatase (305 aa).

2 residues coordinate Fe cation: His182 and Glu262.

This sequence belongs to the ferrochelatase family.

It localises to the cytoplasm. The enzyme catalyses heme b + 2 H(+) = protoporphyrin IX + Fe(2+). Its pathway is porphyrin-containing compound metabolism; protoheme biosynthesis; protoheme from protoporphyrin-IX: step 1/1. Functionally, catalyzes the ferrous insertion into protoporphyrin IX. The protein is Ferrochelatase of Herpetosiphon aurantiacus (strain ATCC 23779 / DSM 785 / 114-95).